A 583-amino-acid polypeptide reads, in one-letter code: Afadin- and alpha-actinin-binding protein (583 aa).

Coiled coils occupy residues 108–220 (NNVE…LAIE), 255–333 (DYEA…QLTN), and 420–453 (EEKE…AIRL). Positions 285 to 328 (LSPCPPLNRGGSAEESQELGDSDREERSAETSRETLDQSCEHAR) are disordered. The segment covering 305–328 (DSDREERSAETSRETLDQSCEHAR) has biased composition (basic and acidic residues). The interval 480–527 (DRMRSSSSDGQSALSVKSEPEIRTSSSKAPPVKSSAYTTFSTPKSSKS) is disordered. Over residues 484-494 (SSSSDGQSALS) the composition is skewed to polar residues. The span at 504–515 (SSSKAPPVKSSA) shows a compositional bias: low complexity. Polar residues predominate over residues 516–527 (YTTFSTPKSSKS).

It belongs to the ADIP family.

The protein localises to the cell junction. The protein resides in the adherens junction. Its subcellular location is the cytoplasm. It is found in the cytoskeleton. It localises to the microtubule organizing center. The protein localises to the centrosome. The protein resides in the centriolar satellite. Belongs to an adhesion system, which plays a role in the organization of homotypic, interneuronal and heterotypic cell-cell adherens junctions (AJs). Involved in cell movement. Acts as a centrosome maturation factor, probably by maintaining the integrity of the pericentriolar material and proper microtubule nucleation at mitotic spindle poles. The polypeptide is Afadin- and alpha-actinin-binding protein (ssx2ip) (Oryzias latipes (Japanese rice fish)).